A 336-amino-acid chain; its full sequence is Biotin synthase (336 aa).

The region spanning 54–281 (NAIQLSTLLS…KAMVRLSAGR (228 aa)) is the Radical SAM core domain. 3 residues coordinate [4Fe-4S] cluster: Cys69, Cys73, and Cys76. Residues Cys113, Cys144, Cys204, and Arg276 each coordinate [2Fe-2S] cluster.

This sequence belongs to the radical SAM superfamily. Biotin synthase family. In terms of assembly, homodimer. Requires [4Fe-4S] cluster as cofactor. The cofactor is [2Fe-2S] cluster.

The catalysed reaction is (4R,5S)-dethiobiotin + (sulfur carrier)-SH + 2 reduced [2Fe-2S]-[ferredoxin] + 2 S-adenosyl-L-methionine = (sulfur carrier)-H + biotin + 2 5'-deoxyadenosine + 2 L-methionine + 2 oxidized [2Fe-2S]-[ferredoxin]. The protein operates within cofactor biosynthesis; biotin biosynthesis; biotin from 7,8-diaminononanoate: step 2/2. Its function is as follows. Catalyzes the conversion of dethiobiotin (DTB) to biotin by the insertion of a sulfur atom into dethiobiotin via a radical-based mechanism. The chain is Biotin synthase from Burkholderia thailandensis (strain ATCC 700388 / DSM 13276 / CCUG 48851 / CIP 106301 / E264).